A 299-amino-acid chain; its full sequence is Taste receptor type 2 member 5 (299 aa).

A topological domain (extracellular) is located at residue M1. A helical membrane pass occupies residues 2 to 22 (LSAGLGLLMLVAVIEFLIGLI). Topologically, residues 23 to 45 (GNGILVVWSLREWIRKFSWSSYN) are cytoplasmic. A helical membrane pass occupies residues 46 to 66 (LIILGLAGCRFLLQWLIILDL). At 67–82 (SLFPLFQSSSWLRYLN) the chain is on the extracellular side. Residues 83–103 (VFWVLVSQASLWFATFLSVFY) form a helical membrane-spanning segment. At 104 to 127 (CKKITTFDRPAYLWLKQRAYNLSL) the chain is on the cytoplasmic side. Residues 128–148 (WCLLGYFIISLLLTVQVGLTV) form a helical membrane-spanning segment. Residues 149 to 175 (HHPPQGNSSIRYPFEHWQYLYVFQLNS) are Extracellular-facing. N155 carries N-linked (GlcNAc...) asparagine glycosylation. The helical transmembrane segment at 176-196 (GSYLPLMVFLVSSGMLIISLY) threads the bilayer. Over 197–223 (THHKKMKVHSAGRRDARAKAHITALKS) the chain is Cytoplasmic. A helical membrane pass occupies residues 224–244 (LGCFLLLHLVYIVASPFSITS). The Extracellular portion of the chain corresponds to 245 to 253 (KTYPPDLTS). The helical transmembrane segment at 254 to 274 (VFIWETLMAAYPSLHSLMLIM) threads the bilayer. Topologically, residues 275–299 (GIPRVKQTCQKILWKTVCARRCWGP) are cytoplasmic.

Belongs to the G-protein coupled receptor T2R family.

It localises to the membrane. In terms of biological role, receptor that may play a role in the perception of bitterness and is gustducin-linked. May play a role in sensing the chemical composition of the gastrointestinal content. The activity of this receptor may stimulate alpha gustducin, mediate PLC-beta-2 activation and lead to the gating of TRPM5. In Papio hamadryas (Hamadryas baboon), this protein is Taste receptor type 2 member 5 (TAS2R5).